The chain runs to 644 residues: Exoribonuclease 2 (644 aa).

The RNB domain occupies 189 to 516; the sequence is REDLTSLDFV…NHRLLKAVIK (328 aa). The S1 motif domain occupies 561–643; sequence GTRFAAEIVD…ETRSIIARPV (83 aa).

The protein belongs to the RNR ribonuclease family. RNase II subfamily.

It localises to the cytoplasm. It catalyses the reaction Exonucleolytic cleavage in the 3'- to 5'-direction to yield nucleoside 5'-phosphates.. In terms of biological role, involved in mRNA degradation. Hydrolyzes single-stranded polyribonucleotides processively in the 3' to 5' direction. The chain is Exoribonuclease 2 from Shigella flexneri serotype 5b (strain 8401).